We begin with the raw amino-acid sequence, 443 residues long: 23S rRNA (uracil(1939)-C(5))-methyltransferase RlmD (443 aa).

The region spanning Ser-12–Asn-70 is the TRAM domain. [4Fe-4S] cluster is bound by residues Cys-83, Cys-89, Cys-92, and Cys-171. S-adenosyl-L-methionine-binding residues include Gln-277, Phe-306, Asn-311, Glu-327, Asp-354, and Asp-374. The active-site Nucleophile is Cys-400.

The protein belongs to the class I-like SAM-binding methyltransferase superfamily. RNA M5U methyltransferase family. RlmD subfamily.

It carries out the reaction uridine(1939) in 23S rRNA + S-adenosyl-L-methionine = 5-methyluridine(1939) in 23S rRNA + S-adenosyl-L-homocysteine + H(+). Its function is as follows. Catalyzes the formation of 5-methyl-uridine at position 1939 (m5U1939) in 23S rRNA. This chain is 23S rRNA (uracil(1939)-C(5))-methyltransferase RlmD, found in Shewanella woodyi (strain ATCC 51908 / MS32).